Consider the following 173-residue polypeptide: Co-chaperone protein HscB homolog (173 aa).

In terms of domain architecture, J spans 3–75 (NPFALFDLPI…ILRADCIIAL (73 aa)).

This sequence belongs to the HscB family. As to quaternary structure, interacts with HscA and stimulates its ATPase activity.

In terms of biological role, co-chaperone involved in the maturation of iron-sulfur cluster-containing proteins. Seems to help targeting proteins to be folded toward HscA. The chain is Co-chaperone protein HscB homolog from Mannheimia succiniciproducens (strain KCTC 0769BP / MBEL55E).